Consider the following 345-residue polypeptide: Molybdopterin synthase catalytic subunit (345 aa).

Substrate is bound by residues 101–102 (HR), lysine 117, and 124–126 (KKE).

Belongs to the MoaE family. MOCS2B subfamily. Heterotetramer; composed of 2 small (Mocs2A) and 2 large (Mocs2B) subunits.

It is found in the cytoplasm. It carries out the reaction 2 [molybdopterin-synthase sulfur-carrier protein]-C-terminal-Gly-aminoethanethioate + cyclic pyranopterin phosphate + H2O = molybdopterin + 2 [molybdopterin-synthase sulfur-carrier protein]-C-terminal Gly-Gly + 2 H(+). It functions in the pathway cofactor biosynthesis; molybdopterin biosynthesis. In terms of biological role, catalytic subunit of the molybdopterin synthase complex, a complex that catalyzes the conversion of precursor Z into molybdopterin. Acts by mediating the incorporation of 2 sulfur atoms from thiocarboxylated Mocs2A into precursor Z to generate a dithiolene group. The chain is Molybdopterin synthase catalytic subunit from Drosophila virilis (Fruit fly).